Consider the following 537-residue polypeptide: Tyrosine-protein kinase Fyn (537 aa).

Residue G2 is the site of N-myristoyl glycine attachment. S-palmitoyl cysteine attachment occurs at residues C3 and C6. T12 bears the Phosphothreonine; by PKC mark. The SH3 domain maps to 82 to 143 (TGVTLFVALY…PSNYVAPVDS (62 aa)). Positions 149 to 246 (WYFGKLGRKD…GLCCRLVVPC (98 aa)) constitute an SH2 domain. Residues 271–524 (LQLIKRLGNG…YLQGFLEDYF (254 aa)) enclose the Protein kinase domain. ATP contacts are provided by residues 277 to 285 (LGNGQFGEV) and K299. D390 functions as the Proton acceptor in the catalytic mechanism. Phosphotyrosine; by autocatalysis is present on Y420. Residue Y531 is modified to Phosphotyrosine.

Belongs to the protein kinase superfamily. Tyr protein kinase family. SRC subfamily. Associates through its SH3 domain, to the p85 subunit of phosphatidylinositol 3-kinase. Requires Mn(2+) as cofactor.

It catalyses the reaction L-tyrosyl-[protein] + ATP = O-phospho-L-tyrosyl-[protein] + ADP + H(+). Inhibited by phosphorylation of Tyr-531 by leukocyte common antigen and activated by dephosphorylation of this site. Functionally, tyrosine-protein kinase implicated in the control of cell growth. Plays a role in the regulation of intracellular calcium levels. Required in brain development and mature brain function with important roles in the regulation of axon growth, axon guidance, and neurite extension. Blocks axon outgrowth and attraction induced by ntn1 by phosphorylating its receptor ddc. This is Tyrosine-protein kinase Fyn (fyn) from Xenopus laevis (African clawed frog).